A 718-amino-acid polypeptide reads, in one-letter code: Mitotic spindle assembly checkpoint protein MAD1 (718 aa).

Met1 carries the post-translational modification N-acetylmethionine. A Phosphoserine modification is found at Ser16. A coiled-coil region spans residues 46 to 632 (QQSMQLEERA…QTKIQEFRKA (587 aa)). Residue Lys61 is modified to N6-acetyllysine; alternate. A Glycyl lysine isopeptide (Lys-Gly) (interchain with G-Cter in SUMO2); alternate cross-link involves residue Lys61. The Nuclear localization signal signature appears at 79–82 (KRAR). Ser214 is modified (phosphoserine). Residues 301 to 340 (VGLELENERLLAKLQSWERLDQTMGLSIRTPEDLSRFVVE) form an important for interaction with IK region. The necessary for interaction with NEK2 stretch occupies residues 380–532 (LLEERKKRET…EAQLERRALQ (153 aa)). Ser428 is modified (phosphoserine). The tract at residues 439 to 480 (EDMVQKVHSHSAEMEAQLSQALEELGGQKQRADMLEMELKML) is important for interaction with IK. A necessary for interaction with MAD2L1 region spans residues 540-551 (TKVLHMSLNPTS). Phosphoserine is present on residues Ser598 and Ser610. Tyr634 carries the phosphotyrosine modification. Residue Thr716 is modified to Phosphothreonine.

It belongs to the MAD1 family. In terms of assembly, homodimer. Dimerizes via its N- and C- terminal regions. Heterodimerizes with MAD2L1 in order to form a tetrameric MAD1L1-MAD2L1 core complex. Interacts with the closed conformation form of MAD2L1 (C-MAD2) and open conformation form of MAD2L1 (O-MAD2). It is unclear whether MAD1L1 dimerization promotes the conversion of closed to open conformation of MAD2L1. Formation of a heterotetrameric core complex containing two molecules each of MAD1L1 and of MAD2L1 promotes binding of another molecule of MAD2L1 to each MAD2L1, resulting in a heterohexamer. Perturbation of the original MAD1L1-MAD2L1 structure by the spindle checkpoint may decrease MAD2L1 affinity for MAD1L1. CDC20 can compete with MAD1L1 for MAD2L1 binding, until the attachment and/or tension dampen the checkpoint signal, preventing further release of MAD2L1 on to CDC20. Also able to interact with the BUB1/BUB3 complex. Interacts with NEK2. Interacts with TTK. Interacts with TPR; the interactions occurs in a microtubule-independent manner. Interacts with IK. Interacts with the viral Tax protein. Interacts with PRAP1. As to quaternary structure, interacts with MAD2L1; this interaction leads to the cytoplasmic sequestration of MAD2L1. Interacts with PRAP1. Phosphorylated; by BUB1. Become hyperphosphorylated in late S through M phases or after mitotic spindle damage. Phosphorylated; by TTK. In terms of tissue distribution, expressed in hepatocellular carcinomas and hepatoma cell lines (at protein level).

It localises to the nucleus. Its subcellular location is the chromosome. The protein localises to the centromere. The protein resides in the kinetochore. It is found in the nucleus envelope. It localises to the cytoplasm. Its subcellular location is the cytoskeleton. The protein localises to the microtubule organizing center. The protein resides in the centrosome. It is found in the spindle. It localises to the spindle pole. In terms of biological role, component of the spindle-assembly checkpoint that prevents the onset of anaphase until all chromosomes are properly aligned at the metaphase plate. Forms a heterotetrameric complex with the closed conformation form of MAD2L1 (C-MAD2) at unattached kinetochores during prometaphase, recruits an open conformation of MAD2L1 (O-MAD2) and promotes the conversion of O-MAD2 to C-MAD2, which ensures mitotic checkpoint signaling. Sequesters MAD2L1 in the cytoplasm preventing its function as an activator of the mitotic spindle assembly checkpoint (SAC) resulting in SAC impairment and chromosomal instability in hepatocellular carcinomas. The chain is Mitotic spindle assembly checkpoint protein MAD1 (MAD1L1) from Homo sapiens (Human).